The primary structure comprises 304 residues: Porphobilinogen deaminase (304 aa).

At C240 the chain carries S-(dipyrrolylmethanemethyl)cysteine.

Belongs to the HMBS family. As to quaternary structure, monomer. It depends on dipyrromethane as a cofactor.

The enzyme catalyses 4 porphobilinogen + H2O = hydroxymethylbilane + 4 NH4(+). It functions in the pathway porphyrin-containing compound metabolism; protoporphyrin-IX biosynthesis; coproporphyrinogen-III from 5-aminolevulinate: step 2/4. Tetrapolymerization of the monopyrrole PBG into the hydroxymethylbilane pre-uroporphyrinogen in several discrete steps. This chain is Porphobilinogen deaminase, found in Xanthomonas oryzae pv. oryzae (strain KACC10331 / KXO85).